Reading from the N-terminus, the 418-residue chain is DnaJ protein homolog 2 (418 aa).

The 66-residue stretch at 11–76 (NTKYYEVLGV…REIYDQYGEE (66 aa)) folds into the J domain. A CR-type zinc finger spans residues 135-219 (GTSKKLSLSR…CKGEKVVQQK (85 aa)). 4 CXXCXGXG motif repeats span residues 148 to 155 (CTKCKGKG), 164 to 171 (CASCQGSG), 191 to 198 (CNECKGTG), and 207 to 214 (CPQCKGEK). A disordered region spans residues 382 to 418 (VNIEEEMRRKQHQQAQEAYDEDDEGHGGAQRVQCAQQ). A Cysteine methyl ester modification is found at Cys415. Cys415 carries the S-farnesyl cysteine lipid modification. Residues 416–418 (AQQ) constitute a propeptide, removed in mature form.

Its subcellular location is the membrane. Functionally, plays a continuous role in plant development probably in the structural organization of compartments. In Allium porrum (Leek), this protein is DnaJ protein homolog 2 (LDJ2).